Reading from the N-terminus, the 119-residue chain is Large ribosomal subunit protein uL18 (119 aa).

Residues 1-20 (MISKPDKNKTRQKRHTRVRG) are disordered. A compositionally biased stretch (basic residues) spans 10-20 (TRQKRHTRVRG).

This sequence belongs to the universal ribosomal protein uL18 family. In terms of assembly, part of the 50S ribosomal subunit; part of the 5S rRNA/L5/L18/L25 subcomplex. Contacts the 5S and 23S rRNAs.

Its function is as follows. This is one of the proteins that bind and probably mediate the attachment of the 5S RNA into the large ribosomal subunit, where it forms part of the central protuberance. This is Large ribosomal subunit protein uL18 from Latilactobacillus sakei subsp. sakei (strain 23K) (Lactobacillus sakei subsp. sakei).